The sequence spans 324 residues: Bis(5'-nucleosyl)-tetraphosphatase, symmetrical (324 aa).

Residues 269–324 (PGREVTAPATAPRAPRRPRERQGRQRARGGRGGGNGNGNGGNAAAPAAAPGDAPQE) are disordered. Over residues 282–297 (APRRPRERQGRQRARG) the composition is skewed to basic residues. The span at 298–309 (GRGGGNGNGNGG) shows a compositional bias: gly residues. The segment covering 310-324 (NAAAPAAAPGDAPQE) has biased composition (low complexity).

Belongs to the Ap4A hydrolase family.

It carries out the reaction P(1),P(4)-bis(5'-adenosyl) tetraphosphate + H2O = 2 ADP + 2 H(+). In terms of biological role, hydrolyzes diadenosine 5',5'''-P1,P4-tetraphosphate to yield ADP. This is Bis(5'-nucleosyl)-tetraphosphatase, symmetrical from Xanthomonas campestris pv. campestris (strain ATCC 33913 / DSM 3586 / NCPPB 528 / LMG 568 / P 25).